Reading from the N-terminus, the 166-residue chain is MTRKAIYPGTFDPFTNGHLDVLERALNIFDHVEVVLAENSQKQTLFSVDERLEMVHEVVREFSNVSVDVLHAGLLADYARQAGASAIVRGVRQVKDFEYEFQMSLLNRHLYPEVTTVFLMPNVKYTYVASTIIREVSMLGGDVSKFVHPFVLDKLNAKRAEREGQS.

T10 is a binding site for substrate. ATP is bound by residues 10–11 (TF) and H18. Substrate-binding residues include K42, L75, and R89. Residues 90-92 (GVR), E100, and 125-131 (YTYVAST) each bind ATP.

Belongs to the bacterial CoaD family. As to quaternary structure, homohexamer. The cofactor is Mg(2+).

The protein localises to the cytoplasm. The catalysed reaction is (R)-4'-phosphopantetheine + ATP + H(+) = 3'-dephospho-CoA + diphosphate. It participates in cofactor biosynthesis; coenzyme A biosynthesis; CoA from (R)-pantothenate: step 4/5. Reversibly transfers an adenylyl group from ATP to 4'-phosphopantetheine, yielding dephospho-CoA (dPCoA) and pyrophosphate. The sequence is that of Phosphopantetheine adenylyltransferase from Chlorobaculum parvum (strain DSM 263 / NCIMB 8327) (Chlorobium vibrioforme subsp. thiosulfatophilum).